The chain runs to 176 residues: Cytochrome b (176 aa).

The next 3 helical transmembrane spans lie at 33–53 (FGSLLGVCLAVQILTGLFLAM), 77–98 (WLLRYLHANGASMFFICLYLHV), and 113–133 (WNVGIILLFAVMATAFMGYVL). Positions 83 and 97 each coordinate heme b.

It belongs to the cytochrome b family. As to quaternary structure, the cytochrome bc1 complex contains 11 subunits: 3 respiratory subunits (MT-CYB, CYC1 and UQCRFS1), 2 core proteins (UQCRC1 and UQCRC2) and 6 low-molecular weight proteins (UQCRH/QCR6, UQCRB/QCR7, UQCRQ/QCR8, UQCR10/QCR9, UQCR11/QCR10 and a cleavage product of UQCRFS1). This cytochrome bc1 complex then forms a dimer. Heme b is required as a cofactor.

It is found in the mitochondrion inner membrane. Functionally, component of the ubiquinol-cytochrome c reductase complex (complex III or cytochrome b-c1 complex) that is part of the mitochondrial respiratory chain. The b-c1 complex mediates electron transfer from ubiquinol to cytochrome c. Contributes to the generation of a proton gradient across the mitochondrial membrane that is then used for ATP synthesis. The sequence is that of Cytochrome b (MT-CYB) from Tadarida brasiliensis (Brazilian free-tailed bat).